We begin with the raw amino-acid sequence, 387 residues long: Sulfoacetaldehyde reductase (387 aa).

It belongs to the iron-containing alcohol dehydrogenase family.

The catalysed reaction is 2-hydroxyethane-1-sulfonate + NAD(+) = sulfoacetaldehyde + NADH + H(+). It participates in organosulfur degradation; alkanesulfonate degradation. In terms of biological role, involved in an anaerobic respiration pathway that converts the sulfonate taurine (2-aminoethanesulfonate) to ammonia, acetate and sulfide. Catalyzes the NADH-dependent reduction of sulfoacetaldehyde to 2-hydroxyethane-1-sulfonate (isethionate). Does not accept acetaldehyde as a substrate. The protein is Sulfoacetaldehyde reductase of Bilophila wadsworthia (strain 3_1_6).